Reading from the N-terminus, the 524-residue chain is MKFVNIYEIQRFDGQPTRHGIAPKKIFRSKYIPTGLVPRLKYWRDVPSRAEMSKRIGKYFEDEFKFYPNEEKLNEAVNIVQEKWISHYGTSLNVTSVSESFRTLPKSTSAGLPFKSGCTKYEARNKMMRFARSQWDRVSKELQLQVLPCRLGARCQLRKRGENKPRLIWAYPGYLSIIENQYLTAIKKVPPPNFIGWSTNWLDGGKSLNRLLFGDKWTWQSIAQIDFSSFDATVRTELIFHAFKILRSLFDLTRTENIMLDQLRHYFINTPILFYDKIIVKNRGIPSGSAFTQIIGTIVNMIACQYASLRSRDYNLRIPFSCWLGDDSFLNFETALCRQEFEYDYLEKFKELGLNVSIDKTHYTTRFIDDFEVRFKGVRPYVKFLGKQIDILLDLTFHNDLDKLDAQMALPEKEDLSAYETGVRLIGLVWAYGAHYDIYLRILKVYLSLKLKPEFHVQQLLSYSEKPERTKRYQENFFSSMKYQLNLDLDIYDLLAFPKFWDVSNRYFGSKYERLDFRSHKIYG.

A RdRp catalytic domain is found at 220–340 (QSIAQIDFSS…NFETALCRQE (121 aa)).

It catalyses the reaction RNA(n) + a ribonucleoside 5'-triphosphate = RNA(n+1) + diphosphate. In terms of biological role, RNA-dependent RNA polymerase which replicates the viral genome. This chain is RNA-directed RNA polymerase, found in Cryptosporidium parvum.